The chain runs to 309 residues: HPr kinase/phosphorylase (309 aa).

Catalysis depends on residues His138 and Lys159. Position 153–160 (153–160 (GDSGIGKS)) interacts with ATP. Mg(2+) is bound at residue Ser160. The active-site Proton acceptor; for phosphorylation activity. Proton donor; for dephosphorylation activity is Asp177. An important for the catalytic mechanism of both phosphorylation and dephosphorylation region spans residues 201–210 (LEIRGVGIID). Mg(2+) is bound at residue Glu202. Arg243 is an active-site residue. An important for the catalytic mechanism of dephosphorylation region spans residues 264-269 (PVKTGR).

This sequence belongs to the HPrK/P family. As to quaternary structure, homohexamer. Mg(2+) serves as cofactor.

It catalyses the reaction [HPr protein]-L-serine + ATP = [HPr protein]-O-phospho-L-serine + ADP + H(+). It carries out the reaction [HPr protein]-O-phospho-L-serine + phosphate + H(+) = [HPr protein]-L-serine + diphosphate. In terms of biological role, catalyzes the ATP- as well as the pyrophosphate-dependent phosphorylation of a specific serine residue in HPr, a phosphocarrier protein of the phosphoenolpyruvate-dependent sugar phosphotransferase system (PTS). HprK/P also catalyzes the pyrophosphate-producing, inorganic phosphate-dependent dephosphorylation (phosphorolysis) of seryl-phosphorylated HPr (P-Ser-HPr). The two antagonistic activities of HprK/P are regulated by several intracellular metabolites, which change their concentration in response to the absence or presence of rapidly metabolisable carbon sources (glucose, fructose, etc.) in the growth medium. Therefore, by controlling the phosphorylation state of HPr, HPrK/P is a sensor enzyme that plays a major role in the regulation of carbon metabolism and sugar transport: it mediates carbon catabolite repression (CCR), and regulates PTS-catalyzed carbohydrate uptake and inducer exclusion. The protein is HPr kinase/phosphorylase of Streptococcus thermophilus (strain ATCC BAA-491 / LMD-9).